The sequence spans 465 residues: Transposase for insertion sequence IS1202 (465 aa).

Residues histidine 157–isoleucine 340 enclose the Integrase catalytic domain.

Required for the transposition of the insertion element. The protein is Transposase for insertion sequence IS1202 of Streptococcus pneumoniae.